The following is a 173-amino-acid chain: Small ribosomal subunit protein uS5 (173 aa).

The 64-residue stretch at 17–80 folds into the S5 DRBM domain; it reads WQERVIQIRR…ADGKKQLIEV (64 aa).

The protein belongs to the universal ribosomal protein uS5 family. As to quaternary structure, part of the 30S ribosomal subunit. Contacts proteins S4 and S8.

Functionally, with S4 and S12 plays an important role in translational accuracy. Its function is as follows. Located at the back of the 30S subunit body where it stabilizes the conformation of the head with respect to the body. This chain is Small ribosomal subunit protein uS5, found in Gloeothece citriformis (strain PCC 7424) (Cyanothece sp. (strain PCC 7424)).